Reading from the N-terminus, the 146-residue chain is L-fucose mutarotase (146 aa).

His22 serves as the catalytic Proton donor. Substrate is bound by residues Asp30, Arg109, and 131 to 133; that span reads YGN.

Belongs to the RbsD / FucU family. FucU mutarotase subfamily. In terms of assembly, homodecamer.

The protein resides in the cytoplasm. It carries out the reaction alpha-L-fucose = beta-L-fucose. It participates in carbohydrate metabolism; L-fucose metabolism. Involved in the anomeric conversion of L-fucose. This is L-fucose mutarotase from Glaesserella parasuis serovar 5 (strain SH0165) (Haemophilus parasuis).